A 743-amino-acid chain; its full sequence is Phosphoribosylformylglycinamidine synthase subunit PurL (743 aa).

H50 is an active-site residue. ATP contacts are provided by Y53 and K92. E94 contributes to the Mg(2+) binding site. Substrate contacts are provided by residues 95–98 (SHNH) and R117. The Proton acceptor role is filled by H96. D118 contacts Mg(2+). Q241 serves as a coordination point for substrate. Mg(2+) is bound at residue D269. Position 313 to 315 (313 to 315 (ESQ)) interacts with substrate. Residues D494 and G531 each contribute to the ATP site. N532 lines the Mg(2+) pocket. Position 534 (S534) interacts with substrate.

Belongs to the FGAMS family. In terms of assembly, monomer. Part of the FGAM synthase complex composed of 1 PurL, 1 PurQ and 2 PurS subunits.

The protein resides in the cytoplasm. It carries out the reaction N(2)-formyl-N(1)-(5-phospho-beta-D-ribosyl)glycinamide + L-glutamine + ATP + H2O = 2-formamido-N(1)-(5-O-phospho-beta-D-ribosyl)acetamidine + L-glutamate + ADP + phosphate + H(+). It participates in purine metabolism; IMP biosynthesis via de novo pathway; 5-amino-1-(5-phospho-D-ribosyl)imidazole from N(2)-formyl-N(1)-(5-phospho-D-ribosyl)glycinamide: step 1/2. Functionally, part of the phosphoribosylformylglycinamidine synthase complex involved in the purines biosynthetic pathway. Catalyzes the ATP-dependent conversion of formylglycinamide ribonucleotide (FGAR) and glutamine to yield formylglycinamidine ribonucleotide (FGAM) and glutamate. The FGAM synthase complex is composed of three subunits. PurQ produces an ammonia molecule by converting glutamine to glutamate. PurL transfers the ammonia molecule to FGAR to form FGAM in an ATP-dependent manner. PurS interacts with PurQ and PurL and is thought to assist in the transfer of the ammonia molecule from PurQ to PurL. This chain is Phosphoribosylformylglycinamidine synthase subunit PurL, found in Mesorhizobium japonicum (strain LMG 29417 / CECT 9101 / MAFF 303099) (Mesorhizobium loti (strain MAFF 303099)).